A 171-amino-acid chain; its full sequence is MEKLPKKRVSKTKSQKLIHSLTTQKNRAFLKKISASEMLLELEKGAFKKNEAYFISDEEDKNYVLVPDNVISLLAENARKAFEARLRAELERDIITQAPIDFEDVREVSLQLLENLRQKDGNLPNINTLNFVKQIKKEHPNLFFNFDNMFKQPPFNENNFENFDNSDEENF.

It belongs to the UPF0763 family.

In Helicobacter pylori (strain 51), this protein is UPF0763 protein KHP_0657.